The primary structure comprises 209 residues: Large ribosomal subunit protein uL3 (209 aa).

This sequence belongs to the universal ribosomal protein uL3 family. Part of the 50S ribosomal subunit. Forms a cluster with proteins L14 and L19.

Its function is as follows. One of the primary rRNA binding proteins, it binds directly near the 3'-end of the 23S rRNA, where it nucleates assembly of the 50S subunit. This Desulfotalea psychrophila (strain LSv54 / DSM 12343) protein is Large ribosomal subunit protein uL3.